We begin with the raw amino-acid sequence, 478 residues long: Lysosome membrane protein 2 (478 aa).

Residues 2-4 (ARC) are Cytoplasmic-facing. A helical transmembrane segment spans residues 5 to 27 (CFYTAGTLSLLLLVTSVTLLVAR). At 28–433 (VFQKAVDQTI…QLKSVINTTL (406 aa)) the chain is on the lumenal side. N45, N68, N105, and N122 each carry an N-linked (GlcNAc...) asparagine glycan. The segment at 155–191 (IIEAMLKAYQQTLFVTHTVHELLWGYKDEVLSLVHIF) is important for interaction with GBA1. Residues N206, N224, N249, and N304 are each glycosylated (N-linked (GlcNAc...) asparagine). 2 cysteine pairs are disulfide-bonded: C274-C329 and C312-C318. N-linked (GlcNAc...) asparagine glycans are attached at residues N325, N412, and N430. Residues 434-459 (IVTNIPYIIMALGVFFGLIFTWLACR) traverse the membrane as a helical segment. Topologically, residues 460 to 478 (GQGSTDEGTADERAPLIRT) are cytoplasmic.

Belongs to the CD36 family. As to quaternary structure, interacts with GBA1. Acylated by palmitic acid group(s).

It is found in the lysosome membrane. Acts as a lysosomal receptor for glucosylceramidase (GBA1) targeting. The sequence is that of Lysosome membrane protein 2 (Scarb2) from Rattus norvegicus (Rat).